Reading from the N-terminus, the 220-residue chain is ATP synthase subunit beta, chloroplastic (220 aa).

Belongs to the ATPase alpha/beta chains family. As to quaternary structure, F-type ATPases have 2 components, CF(1) - the catalytic core - and CF(0) - the membrane proton channel. CF(1) has five subunits: alpha(3), beta(3), gamma(1), delta(1), epsilon(1). CF(0) has four main subunits: a(1), b(1), b'(1) and c(9-12).

The protein resides in the plastid. It localises to the chloroplast thylakoid membrane. It catalyses the reaction ATP + H2O + 4 H(+)(in) = ADP + phosphate + 5 H(+)(out). Its function is as follows. Produces ATP from ADP in the presence of a proton gradient across the membrane. The catalytic sites are hosted primarily by the beta subunits. This Osmundastrum cinnamomeum (Cinnamon fern) protein is ATP synthase subunit beta, chloroplastic (atpB).